The primary structure comprises 229 residues: Cytidylate kinase (229 aa).

12–20 contacts ATP; it reads GPSGAGKGT.

Belongs to the cytidylate kinase family. Type 1 subfamily.

It localises to the cytoplasm. The catalysed reaction is CMP + ATP = CDP + ADP. The enzyme catalyses dCMP + ATP = dCDP + ADP. This chain is Cytidylate kinase, found in Shewanella frigidimarina (strain NCIMB 400).